The chain runs to 318 residues: tRNA-cytidine(32) 2-sulfurtransferase (318 aa).

A disordered region spans residues 1 to 29 (MNHVSSTKPDTAPSKHLTSSHIDATDQNN). Over residues 16-27 (HLTSSHIDATDQ) the composition is skewed to polar residues. A PP-loop motif motif is present at residues 64–69 (SGGKDS). [4Fe-4S] cluster contacts are provided by Cys-139, Cys-142, and Cys-230.

Belongs to the TtcA family. As to quaternary structure, homodimer. Requires Mg(2+) as cofactor. The cofactor is [4Fe-4S] cluster.

The protein resides in the cytoplasm. The catalysed reaction is cytidine(32) in tRNA + S-sulfanyl-L-cysteinyl-[cysteine desulfurase] + AH2 + ATP = 2-thiocytidine(32) in tRNA + L-cysteinyl-[cysteine desulfurase] + A + AMP + diphosphate + H(+). The protein operates within tRNA modification. Its function is as follows. Catalyzes the ATP-dependent 2-thiolation of cytidine in position 32 of tRNA, to form 2-thiocytidine (s(2)C32). The sulfur atoms are provided by the cysteine/cysteine desulfurase (IscS) system. The polypeptide is tRNA-cytidine(32) 2-sulfurtransferase (Pseudoalteromonas atlantica (strain T6c / ATCC BAA-1087)).